Here is a 56-residue protein sequence, read N- to C-terminus: Small ribosomal subunit protein eS31 (56 aa).

4 residues coordinate Zn(2+): Cys28, Cys31, Cys46, and Cys49. A C4-type zinc finger spans residues 28–49 (CPRCGPGVFMANHKDRWSCGRC).

It belongs to the eukaryotic ribosomal protein eS31 family. Part of the 30S ribosomal subunit. Requires Zn(2+) as cofactor.

The polypeptide is Small ribosomal subunit protein eS31 (Thermococcus gammatolerans (strain DSM 15229 / JCM 11827 / EJ3)).